Here is a 148-residue protein sequence, read N- to C-terminus: 3-dehydroquinate dehydratase (148 aa).

Catalysis depends on tyrosine 23, which acts as the Proton acceptor. Substrate is bound by residues asparagine 75, histidine 81, and aspartate 88. Residue histidine 101 is the Proton donor of the active site. Substrate is bound by residues 102-103 (LS) and arginine 112.

It belongs to the type-II 3-dehydroquinase family. As to quaternary structure, homododecamer.

It carries out the reaction 3-dehydroquinate = 3-dehydroshikimate + H2O. Its pathway is metabolic intermediate biosynthesis; chorismate biosynthesis; chorismate from D-erythrose 4-phosphate and phosphoenolpyruvate: step 3/7. Catalyzes a trans-dehydration via an enolate intermediate. This Cellvibrio japonicus (strain Ueda107) (Pseudomonas fluorescens subsp. cellulosa) protein is 3-dehydroquinate dehydratase.